A 485-amino-acid chain; its full sequence is Cytolytic protein enterolobin (485 aa).

Disulfide bonds link C34/C98 and C183/C189.

This sequence belongs to the aerolysin family. In terms of assembly, oligomerizes as a hexamer. Post-translationally, the N-terminus is blocked.

In terms of biological role, cytolytic protein with insecticidal activity. Acts as a pro-inflammatory agent. This chain is Cytolytic protein enterolobin, found in Enterolobium contortisiliquum (Pacara earpod tree).